Here is a 136-residue protein sequence, read N- to C-terminus: Ribosome-binding factor A (136 aa).

This sequence belongs to the RbfA family. Monomer. Binds 30S ribosomal subunits, but not 50S ribosomal subunits or 70S ribosomes.

The protein localises to the cytoplasm. In terms of biological role, one of several proteins that assist in the late maturation steps of the functional core of the 30S ribosomal subunit. Associates with free 30S ribosomal subunits (but not with 30S subunits that are part of 70S ribosomes or polysomes). Required for efficient processing of 16S rRNA. May interact with the 5'-terminal helix region of 16S rRNA. The sequence is that of Ribosome-binding factor A from Yersinia enterocolitica serotype O:8 / biotype 1B (strain NCTC 13174 / 8081).